The following is an 84-amino-acid chain: ATP synthase subunit c (84 aa).

Transmembrane regions (helical) follow at residues 8–28 (VAGM…GGGI) and 56–76 (IIGS…AILL).

It belongs to the ATPase C chain family. F-type ATPases have 2 components, F(1) - the catalytic core - and F(0) - the membrane proton channel. F(1) has five subunits: alpha(3), beta(3), gamma(1), delta(1), epsilon(1). F(0) has three main subunits: a(1), b(2) and c(10-14). The alpha and beta chains form an alternating ring which encloses part of the gamma chain. F(1) is attached to F(0) by a central stalk formed by the gamma and epsilon chains, while a peripheral stalk is formed by the delta and b chains.

It is found in the cell membrane. Its function is as follows. F(1)F(0) ATP synthase produces ATP from ADP in the presence of a proton or sodium gradient. F-type ATPases consist of two structural domains, F(1) containing the extramembraneous catalytic core and F(0) containing the membrane proton channel, linked together by a central stalk and a peripheral stalk. During catalysis, ATP synthesis in the catalytic domain of F(1) is coupled via a rotary mechanism of the central stalk subunits to proton translocation. Key component of the F(0) channel; it plays a direct role in translocation across the membrane. A homomeric c-ring of between 10-14 subunits forms the central stalk rotor element with the F(1) delta and epsilon subunits. The sequence is that of ATP synthase subunit c from Clostridium novyi (strain NT).